The sequence spans 124 residues: Glycine cleavage system H protein (124 aa).

The 83-residue stretch at 22–104 folds into the Lipoyl-binding domain; that stretch reads VATVGITEFA…YGAGWLFRVE (83 aa). Lysine 63 is subject to N6-lipoyllysine.

This sequence belongs to the GcvH family. In terms of assembly, the glycine cleavage system is composed of four proteins: P, T, L and H. It depends on (R)-lipoate as a cofactor.

In terms of biological role, the glycine cleavage system catalyzes the degradation of glycine. The H protein shuttles the methylamine group of glycine from the P protein to the T protein. In Beutenbergia cavernae (strain ATCC BAA-8 / DSM 12333 / CCUG 43141 / JCM 11478 / NBRC 16432 / NCIMB 13614 / HKI 0122), this protein is Glycine cleavage system H protein.